The primary structure comprises 504 residues: Cytochrome P450 3A1 (504 aa).

Cys443 provides a ligand contact to heme.

This sequence belongs to the cytochrome P450 family. Heme is required as a cofactor.

The protein resides in the endoplasmic reticulum membrane. It is found in the microsome membrane. The catalysed reaction is an organic molecule + reduced [NADPH--hemoprotein reductase] + O2 = an alcohol + oxidized [NADPH--hemoprotein reductase] + H2O + H(+). In terms of biological role, cytochromes P450 are a group of heme-thiolate monooxygenases. In liver microsomes, this enzyme is involved in an NADPH-dependent electron transport pathway. It oxidizes a variety of structurally unrelated compounds, including steroids, fatty acids, and xenobiotics. The protein is Cytochrome P450 3A1 (Cyp3a1) of Rattus norvegicus (Rat).